We begin with the raw amino-acid sequence, 301 residues long: Glycine--tRNA ligase alpha subunit (301 aa).

Belongs to the class-II aminoacyl-tRNA synthetase family. In terms of assembly, tetramer of two alpha and two beta subunits.

The protein localises to the cytoplasm. It catalyses the reaction tRNA(Gly) + glycine + ATP = glycyl-tRNA(Gly) + AMP + diphosphate. The protein is Glycine--tRNA ligase alpha subunit of Shewanella amazonensis (strain ATCC BAA-1098 / SB2B).